Consider the following 374-residue polypeptide: All-trans-retinol dehydrogenase [NAD(+)] ADH7 (374 aa).

M1 is modified (N-acetylmethionine). C47, H68, C98, C101, C104, C112, and C174 together coordinate Zn(2+). NAD(+) contacts are provided by residues 199-204 (GLGGVG), D223, K228, 292-294 (VGA), and R369.

It belongs to the zinc-containing alcohol dehydrogenase family. Class-IV subfamily. As to quaternary structure, homodimer. It depends on Zn(2+) as a cofactor. As to expression, preferentially expressed in stomach.

The protein localises to the cytoplasm. It catalyses the reaction a primary alcohol + NAD(+) = an aldehyde + NADH + H(+). It carries out the reaction 10-hydroxydecanoate + NAD(+) = 10-oxodecanoate + NADH + H(+). The catalysed reaction is all-trans-retinol + NAD(+) = all-trans-retinal + NADH + H(+). The enzyme catalyses 9-cis-retinol + NAD(+) = 9-cis-retinal + NADH + H(+). It catalyses the reaction all-trans-3,4-didehydroretinol + NAD(+) = all-trans-3,4-didehydroretinal + NADH + H(+). It carries out the reaction all-trans-4-hydroxyretinol + NAD(+) = all-trans-4-hydroxyretinal + NADH + H(+). The catalysed reaction is all-trans-4-oxoretinol + NAD(+) = all-trans-4-oxoretinal + NADH + H(+). The enzyme catalyses 12-hydroxydodecanoate + NAD(+) = 12-oxododecanoate + NADH + H(+). It catalyses the reaction 16-hydroxyhexadecanoate + NAD(+) = 16-oxohexadecanoate + NADH + H(+). It carries out the reaction hexan-1-ol + NAD(+) = hexanal + NADH + H(+). The catalysed reaction is (E)-hex-2-en-1-ol + NAD(+) = (E)-hex-2-enal + NADH + H(+). The enzyme catalyses (E)-4-hydroxynon-2-en-1-ol + NAD(+) = (E)-4-hydroxynon-2-enal + NADH + H(+). Retinol oxidation is inhibited by the detergent Tween 80. Ethanol inhibits both all-trans-retinol and 9-cis-retinol oxidation. 13-cis-retinol is an effective competitive inhibitor of the 9-cis-retinol oxidation. All-trans-retinoic acid is a powerful inhibitor of all-trans-retinol oxidation. 13-cis-retinoic acid is a powerful inhibitor of all-trans-retinol oxidation. Cimetidine and ranitidine inhibited ethanol oxidation. Catalyzes the NAD-dependent oxidation of all-trans-retinol, alcohol, aldehyde and omega-hydroxy fatty acids and their derivatives. Oxidizes preferentially all trans-retinol, all-trans-4-hydroxyretinol, 9-cis-retinol, 2-hexenol, and long chain omega-hydroxy fatty acids such as juniperic acid. In vitro can also catalyze the NADH-dependent reduction of all-trans-retinal and aldehydes and their derivatives. Reduces preferentially all trans-retinal, all-trans-4-oxoretinal and hexanal. Catalyzes in the oxidative direction with higher efficiency. Therefore may participate in retinoid metabolism, fatty acid omega-oxidation, and elimination of cytotoxic aldehydes produced by lipid peroxidation. The chain is All-trans-retinol dehydrogenase [NAD(+)] ADH7 (Adh7) from Rattus norvegicus (Rat).